A 505-amino-acid polypeptide reads, in one-letter code: AMP phosphorylase (505 aa).

AMP-binding positions include Gly-170, 196-201 (SRAITS), and Thr-205. Asp-258 (proton donor) is an active-site residue. 2 residues coordinate AMP: Ser-266 and Lys-290.

This sequence belongs to the thymidine/pyrimidine-nucleoside phosphorylase family. Type 2 subfamily.

The enzyme catalyses AMP + phosphate = alpha-D-ribose 1,5-bisphosphate + adenine. It carries out the reaction CMP + phosphate = cytosine + alpha-D-ribose 1,5-bisphosphate. It catalyses the reaction UMP + phosphate = alpha-D-ribose 1,5-bisphosphate + uracil. Catalyzes the conversion of AMP and phosphate to adenine and ribose 1,5-bisphosphate (R15P). Exhibits phosphorylase activity toward CMP and UMP in addition to AMP. Functions in an archaeal AMP degradation pathway, together with R15P isomerase and RubisCO. The sequence is that of AMP phosphorylase from Methanococcus maripaludis (strain C6 / ATCC BAA-1332).